The primary structure comprises 95 residues: Trypomastigote decay-accelerating factor (95 aa).

It belongs to the receptors of complement activation (RCA) family.

Interferes with the efficient assembly of the host C3 convertase. Could protect parasites from complement-mediated lysis by sera from a number of different species. This Trypanosoma cruzi protein is Trypomastigote decay-accelerating factor.